A 538-amino-acid chain; its full sequence is Bifunctional purine biosynthesis protein PurH (538 aa).

The region spanning 8–158 (IPAPDLVPVR…KNHAYVAIVT (151 aa)) is the MGS-like domain.

Belongs to the PurH family.

The enzyme catalyses (6R)-10-formyltetrahydrofolate + 5-amino-1-(5-phospho-beta-D-ribosyl)imidazole-4-carboxamide = 5-formamido-1-(5-phospho-D-ribosyl)imidazole-4-carboxamide + (6S)-5,6,7,8-tetrahydrofolate. The catalysed reaction is IMP + H2O = 5-formamido-1-(5-phospho-D-ribosyl)imidazole-4-carboxamide. It functions in the pathway purine metabolism; IMP biosynthesis via de novo pathway; 5-formamido-1-(5-phospho-D-ribosyl)imidazole-4-carboxamide from 5-amino-1-(5-phospho-D-ribosyl)imidazole-4-carboxamide (10-formyl THF route): step 1/1. It participates in purine metabolism; IMP biosynthesis via de novo pathway; IMP from 5-formamido-1-(5-phospho-D-ribosyl)imidazole-4-carboxamide: step 1/1. The sequence is that of Bifunctional purine biosynthesis protein PurH from Mesorhizobium japonicum (strain LMG 29417 / CECT 9101 / MAFF 303099) (Mesorhizobium loti (strain MAFF 303099)).